The primary structure comprises 661 residues: Junctophilin-1 (661 aa).

Residues 1-639 (MTGGRFDFDD…EKEANSGPNS (639 aa)) are Cytoplasmic-facing. MORN repeat units lie at residues 14-36 (YCGG…KGQG), 38-59 (YSGS…SGNT), 60-82 (YQGY…KWMY), 106-128 (YEGT…DGGT), and 129-151 (YQGQ…PYGM). S157, S216, and S220 each carry phosphoserine. The tract at residues 228–247 (SKSSISSKRSSVRSDAAMSR) is disordered. MORN repeat units lie at residues 281–303 (YMGE…NGMK) and 304–326 (YEGE…DGSK). Over residues 433 to 454 (DAKENPEEKVPEKPPTPKESPH) the composition is skewed to basic and acidic residues. The interval 433–631 (DAKENPEEKV…SNDSCPALEK (199 aa)) is disordered. Residue T448 is modified to Phosphothreonine. S452 bears the Phosphoserine mark. T461 carries the post-translational modification Phosphothreonine. S465, S469, and S475 each carry phosphoserine. Positions 599-613 (VAKESKAEPKAKKSE) are enriched in basic and acidic residues. The chain crosses the membrane as a helical; Anchor for type IV membrane protein span at residues 640–660 (IMIVLVMLLNIGLAILFVHFL).

The protein belongs to the junctophilin family. In terms of tissue distribution, abundantly expressed in skeletal muscle. Very low levels in heart.

It localises to the cell membrane. Its subcellular location is the endoplasmic reticulum membrane. The protein resides in the sarcoplasmic reticulum membrane. In terms of biological role, junctophilins contribute to the formation of junctional membrane complexes (JMCs) which link the plasma membrane with the endoplasmic or sarcoplasmic reticulum in excitable cells. Provides a structural foundation for functional cross-talk between the cell surface and intracellular calcium release channels. JPH1 contributes to the construction of the skeletal muscle triad by linking the t-tubule (transverse-tubule) and SR (sarcoplasmic reticulum) membranes. This Homo sapiens (Human) protein is Junctophilin-1 (JPH1).